Consider the following 159-residue polypeptide: Ornithine decarboxylase antizyme (159 aa).

It belongs to the ODC antizyme family. In terms of assembly, interacts with ODC1 and thereby sterically blocks ODC homodimerization.

Ornithine decarboxylase (ODC) antizyme protein that negatively regulates ODC activity and intracellular polyamine biosynthesis and uptake in response to increased intracellular polyamine levels. Binds to ODC monomers, inhibiting the assembly of the functional ODC homodimer, and targets the monomers for ubiquitin-independent proteolytic destruction by the 26S proteasome. The chain is Ornithine decarboxylase antizyme from Caenorhabditis elegans.